Reading from the N-terminus, the 862-residue chain is MASNGHFSSVGDVDGGNYQHGVQVVDGDKEFNPNLSKYLAHENVTPAGFNYHLISVFGSQSTGKSTLLNTLFKTDFSVMSETERRQTTKGIWLSKNKRTASNEKEKMADNVLVMDVEGTDGRERGEDQDFERKSALFALATSEVLIVNIWEHQVGLYQGANMGLLKTVFEVNLQLFLKDTKSTPRSLLFFVIRDFVGTTPLENLRNTLMQDLQRIWMSLSKPEGTENSTIEDYFDFEFAGLPHKSFQPEKFASEVDKLSTRFRDGHRDPSSTSAKGTAVEGGVFLPEYHRRIPADGFAVYAEGIWDQIVNNKDLDLPTQQELLAQFRCDEIAREVLILFDETIGPFEVQQAEGVRSGIPLILGSLGVAMRAARGKTMTSFETEASRYHKRVFMTKKSELEEKIDTRLKALFSGQLSAAHKSGVTQFSEAVSAAVKAGQKKGASYDFAEIVTRERKLAIEKFENEASTTMVEGAPWSDYKQELSLFQKDLEKISSQLRKDEMRRLATRVERWVRSRLGDSIDLEFNALGSGRGGSRAPENGDKPSEKTIWDRIWSLFVNTVLDAERRFTERARSFDASLEEVDVGLWRLRRKSWGVLRSKIEEEMMEGNILHKLRENFEDKFRYDDVGVPRIWRPTDDIEGIYTTARESTLSLIPLLARFRLNETSAPPPLDKWVGHMPSSASAADEEDLAPIGGVDEDDGKSLEEEMTMLSEAKRQDLTVRFKKAADGVYVEAKRSAIGGITQVPLYFYGLLLALGWNEIIAVLRNPIYFIFLLLIGVGAYVTFRLNLWGPMINMAEAASRQAVEEGKRRLREFLESSDSGRQAMAMSGRNARGTEEYEMSSNLKSKGRRTDTSDDDNDDDL.

At 1-743 (MASNGHFSSV…KRSAIGGITQ (743 aa)) the chain is on the cytoplasmic side. The region spanning 48–301 (GFNYHLISVF…IPADGFAVYA (254 aa)) is the GB1/RHD3-type G domain. Residue 58–65 (GSQSTGKS) participates in GTP binding. Residues 476–500 (SDYKQELSLFQKDLEKISSQLRKDE) adopt a coiled-coil conformation. The chain crosses the membrane as a helical span at residues 744 to 764 (VPLYFYGLLLALGWNEIIAVL). The Lumenal portion of the chain corresponds to 765–767 (RNP). A helical transmembrane segment spans residues 768–788 (IYFIFLLLIGVGAYVTFRLNL). The Cytoplasmic segment spans residues 789–862 (WGPMINMAEA…TSDDDNDDDL (74 aa)). The disordered stretch occupies residues 818-862 (SDSGRQAMAMSGRNARGTEEYEMSSNLKSKGRRTDTSDDDNDDDL).

The protein belongs to the TRAFAC class dynamin-like GTPase superfamily. GB1/RHD3 GTPase family. RHD3 subfamily.

It localises to the endoplasmic reticulum membrane. In terms of biological role, cooperates with the reticulon proteins and tubule-shaping DP1 family proteins to generate and maintain the structure of the tubular endoplasmic reticulum network. Has GTPase activity, which is required for its function in ER organization. This is Protein SEY1 from Arthroderma otae (strain ATCC MYA-4605 / CBS 113480) (Microsporum canis).